Here is a 322-residue protein sequence, read N- to C-terminus: tRNA-modifying protein YgfZ (322 aa).

Tryptophan 182 serves as a coordination point for folate.

Belongs to the tRNA-modifying YgfZ family.

The protein resides in the cytoplasm. Folate-binding protein involved in regulating the level of ATP-DnaA and in the modification of some tRNAs. It is probably a key factor in regulatory networks that act via tRNA modification, such as initiation of chromosomal replication. The protein is tRNA-modifying protein YgfZ of Vibrio campbellii (strain ATCC BAA-1116).